The sequence spans 410 residues: Probable peptidoglycan glycosyltransferase FtsW (410 aa).

Helical transmembrane passes span 39–59 (LDPLLIWSATGLLLIGLVMVY), 78–98 (YFLLRHAMFLAVGIGAGLAAF), 108–128 (FAPWLFLIGVMLLVVVLIPGV), 177–197 (GFLPMAAMILLVGFLLLGEPD), 198–218 (FGAFVVITAIAFGVLFLGGIN), 221–241 (VFALLALVAVIGFMLLIWLSP), 303–323 (IAEELGFAGVLTVIALFAILI), 342–362 (GLVAMGIGLWLGVQSFINMGV), and 374–394 (LPLMSFGGSGIVANCLALAIL).

Belongs to the SEDS family. FtsW subfamily.

Its subcellular location is the cell inner membrane. The enzyme catalyses [GlcNAc-(1-&gt;4)-Mur2Ac(oyl-L-Ala-gamma-D-Glu-L-Lys-D-Ala-D-Ala)](n)-di-trans,octa-cis-undecaprenyl diphosphate + beta-D-GlcNAc-(1-&gt;4)-Mur2Ac(oyl-L-Ala-gamma-D-Glu-L-Lys-D-Ala-D-Ala)-di-trans,octa-cis-undecaprenyl diphosphate = [GlcNAc-(1-&gt;4)-Mur2Ac(oyl-L-Ala-gamma-D-Glu-L-Lys-D-Ala-D-Ala)](n+1)-di-trans,octa-cis-undecaprenyl diphosphate + di-trans,octa-cis-undecaprenyl diphosphate + H(+). The protein operates within cell wall biogenesis; peptidoglycan biosynthesis. In terms of biological role, peptidoglycan polymerase that is essential for cell division. The polypeptide is Probable peptidoglycan glycosyltransferase FtsW (Aromatoleum aromaticum (strain DSM 19018 / LMG 30748 / EbN1) (Azoarcus sp. (strain EbN1))).